Consider the following 136-residue polypeptide: UPF0310 protein SMU_442 (136 aa).

This sequence belongs to the UPF0310 family.

In Streptococcus mutans serotype c (strain ATCC 700610 / UA159), this protein is UPF0310 protein SMU_442.